A 221-amino-acid chain; its full sequence is Endo-1,4-beta-xylanase 11A (221 aa).

The first 17 residues, 1–17 (MVSFTTLLTAVATAVSA), serve as a signal peptide directing secretion. The GH11 domain maps to 28–218 (RGIQPGTGVH…SSGSAEIEVR (191 aa)). N89 carries N-linked (GlcNAc...) asparagine glycosylation. The Nucleophile role is filled by E113. E205 functions as the Proton donor in the catalytic mechanism.

Belongs to the glycosyl hydrolase 11 (cellulase G) family.

The protein resides in the secreted. It catalyses the reaction Endohydrolysis of (1-&gt;4)-beta-D-xylosidic linkages in xylans.. It functions in the pathway glycan degradation; xylan degradation. Its activity is regulated as follows. Retains an activity of 52.5% in the presence of 5 mM SDS. Endo-1,4-beta-xylanase involved in the hydrolysis of xylan, a major structural heterogeneous polysaccharide found in plant biomass representing the second most abundant polysaccharide in the biosphere, after cellulose. Is an alkali-tolerant enzyme, exhibiting 50.6% of activity at pH 9.0, and 26.9% even at pH 10.0. This chain is Endo-1,4-beta-xylanase 11A, found in Humicola insolens (Soft-rot fungus).